Here is a 450-residue protein sequence, read N- to C-terminus: Protein tweety homolog 1 (450 aa).

Topologically, residues 1–43 (MGAPPGYRPSAWVHLLHQLPRADFQLRPVPSVFAPQEQEYQQA) are extracellular. Residues 44–64 (LLLVAALAGLGLGLSLIFIAV) form a helical membrane-spanning segment. The Cytoplasmic portion of the chain corresponds to 65–88 (YLIRFCCCRPPEPPGSKIPSPGGG). Residues 89–109 (CVTWSCIVALLAGCTGIGIGF) form a helical membrane-spanning segment. At 110 to 214 (YGNSETSDGV…NVSFVEEYRW (105 aa)) the chain is on the extracellular side. N-linked (GlcNAc...) asparagine glycans are attached at residues Asn-130 and Asn-205. A helical membrane pass occupies residues 215–235 (LAYVLLLLLELLVCLFTLLGL). At 236–240 (AKQSK) the chain is on the cytoplasmic side. The chain crosses the membrane as a helical span at residues 241 to 261 (WLVIVMTVMSLLVLVLSWGSM). The Extracellular portion of the chain corresponds to 262 to 390 (GLEAATAVGL…LRGLCEDALE (129 aa)). Intrachain disulfides connect Cys-275–Cys-385 and Cys-303–Cys-370. Asn-284 and Asn-355 each carry an N-linked (GlcNAc...) asparagine glycan. Residues 391–411 (GLLFLLLFSLLSAGALATALC) traverse the membrane as a helical segment. At 412-450 (SLPRAWALFPPSDDYDDTDDDDPFNPQESKRFVQWQSSI) the chain is on the cytoplasmic side. A disordered region spans residues 428–450 (DTDDDDPFNPQESKRFVQWQSSI). Ser-440 bears the Phosphoserine mark.

Belongs to the tweety family. Homotetramer; disulfide-linked. Homodimer. Post-translationally, N-glycosylated. Contains high-mannose, hybrid and complex oligosaccharides. Expressed in brain, eye, ovary and testis, and at lower levels in muscle, placenta, liver and lung.

It localises to the cell membrane. The enzyme catalyses chloride(in) = chloride(out). It carries out the reaction L-glutamate(out) = L-glutamate(in). Its function is as follows. Calcium-independent, swelling-dependent volume-regulated anion channel (VRAC-swell) which plays a pivotal role in the process of regulatory volume decrease (RVD) in the brain through the efflux of anions like chloride and organic osmolytes like glutamate. Functionally, ca(2+)-independent, swelling-activated chloride channel, possibly involved in regulation of cell volume. The sequence is that of Protein tweety homolog 1 (TTYH1) from Homo sapiens (Human).